The following is a 509-amino-acid chain: Aspartyl/glutamyl-tRNA(Asn/Gln) amidotransferase subunit B (509 aa).

The protein belongs to the GatB/GatE family. GatB subfamily. In terms of assembly, heterotrimer of A, B and C subunits.

The enzyme catalyses L-glutamyl-tRNA(Gln) + L-glutamine + ATP + H2O = L-glutaminyl-tRNA(Gln) + L-glutamate + ADP + phosphate + H(+). It carries out the reaction L-aspartyl-tRNA(Asn) + L-glutamine + ATP + H2O = L-asparaginyl-tRNA(Asn) + L-glutamate + ADP + phosphate + 2 H(+). In terms of biological role, allows the formation of correctly charged Asn-tRNA(Asn) or Gln-tRNA(Gln) through the transamidation of misacylated Asp-tRNA(Asn) or Glu-tRNA(Gln) in organisms which lack either or both of asparaginyl-tRNA or glutaminyl-tRNA synthetases. The reaction takes place in the presence of glutamine and ATP through an activated phospho-Asp-tRNA(Asn) or phospho-Glu-tRNA(Gln). This is Aspartyl/glutamyl-tRNA(Asn/Gln) amidotransferase subunit B from Psychrobacter cryohalolentis (strain ATCC BAA-1226 / DSM 17306 / VKM B-2378 / K5).